A 90-amino-acid polypeptide reads, in one-letter code: Small ribosomal subunit protein bS20 (90 aa).

The tract at residues 1–29 is disordered; the sequence is MANTASAEKRNRQAQKRRARNVQVRTGVK.

This sequence belongs to the bacterial ribosomal protein bS20 family.

Its function is as follows. Binds directly to 16S ribosomal RNA. In Anaeromyxobacter sp. (strain Fw109-5), this protein is Small ribosomal subunit protein bS20.